We begin with the raw amino-acid sequence, 504 residues long: DnaJ homolog subfamily C member 3 (504 aa).

The N-terminal stretch at 1–31 (MVAPGSVTSRLGSVFPFLLVLVDLQYEGAEC) is a signal peptide. TPR repeat units follow at residues 37-70 (VEKH…DPDN), 72-104 (IAYY…KMDF), 105-138 (TAAR…NPSE), 154-187 (MQRL…CVWD), 189-221 (ELRE…KNDN), 222-255 (TEAF…DQDH), 268-301 (LNKL…EPGV), 306-339 (IRSK…EPDN), and 340-373 (VNAL…NEND). Cys248 and Cys258 are oxidised to a cystine. Ser274 is modified (phosphoserine). Cys313 and Cys329 are oxidised to a cystine. The segment at 375–393 (QIREGLEKAQRLLKQSQRR) is flexible linker. Residues 394-462 (DYYKILGVKR…EMRKKFDDGE (69 aa)) enclose the J domain. The tract at residues 451–481 (DPEMRKKFDDGEDPLDAESQQGGGGNPFHRS) is disordered.

In terms of assembly, interacts with EIF2AK4/GCN2; this interaction occurs under endoplasmic reticulum (ER) stress, hypothermic and amino acid starving stress conditions and inhibits EIF2AK4/GCN2 kinase activity. Interacts with EIF2AK3. Interacts with EIF2AK2. Forms a trimeric complex with DNAJB1 and HSPA8. Interacts with THAP12.

Its subcellular location is the endoplasmic reticulum. Its function is as follows. Involved in the unfolded protein response (UPR) during endoplasmic reticulum (ER) stress. Acts as a negative regulator of the EIF2AK4/GCN2 kinase activity by preventing the phosphorylation of eIF-2-alpha at 'Ser-52' and hence attenuating general protein synthesis under ER stress, hypothermic and amino acid starving stress conditions. Co-chaperone of HSPA8/HSC70, it stimulates its ATPase activity. May inhibit both the autophosphorylation of EIF2AK2/PKR and the ability of EIF2AK2 to catalyze phosphorylation of the EIF2A. May inhibit EIF2AK3/PERK activity. This Bos taurus (Bovine) protein is DnaJ homolog subfamily C member 3 (DNAJC3).